Here is a 235-residue protein sequence, read N- to C-terminus: Sperm-associated microtubule inner protein 5 (235 aa).

As to quaternary structure, microtubule inner protein component of sperm flagellar doublet microtubules. As to expression, expressed in sperm.

Its subcellular location is the cytoplasm. It is found in the cytoskeleton. The protein resides in the flagellum axoneme. It localises to the nucleus. Its function is as follows. Microtubule inner protein (MIP) part of the dynein-decorated doublet microtubules (DMTs) in flagellum axoneme. May serve to reinforce and thus stabilize the microtubule structure in the sperm flagella. The polypeptide is Sperm-associated microtubule inner protein 5 (SPMIP5) (Bos taurus (Bovine)).